The sequence spans 191 residues: NADH-quinone oxidoreductase subunit B 2 (191 aa).

4 residues coordinate [4Fe-4S] cluster: cysteine 69, cysteine 70, cysteine 134, and cysteine 164.

It belongs to the complex I 20 kDa subunit family. NDH-1 is composed of 14 different subunits. Subunits NuoB, C, D, E, F, and G constitute the peripheral sector of the complex. [4Fe-4S] cluster is required as a cofactor.

It localises to the cell inner membrane. It carries out the reaction a quinone + NADH + 5 H(+)(in) = a quinol + NAD(+) + 4 H(+)(out). Its function is as follows. NDH-1 shuttles electrons from NADH, via FMN and iron-sulfur (Fe-S) centers, to quinones in the respiratory chain. Couples the redox reaction to proton translocation (for every two electrons transferred, four hydrogen ions are translocated across the cytoplasmic membrane), and thus conserves the redox energy in a proton gradient. The sequence is that of NADH-quinone oxidoreductase subunit B 2 from Gluconacetobacter diazotrophicus (strain ATCC 49037 / DSM 5601 / CCUG 37298 / CIP 103539 / LMG 7603 / PAl5).